The primary structure comprises 683 residues: Inositol-trisphosphate 3-kinase C (683 aa).

A disordered region spans residues 1–124 (MRRCPCRGSL…PDRSSLRTHL (124 aa)). Residues 13–22 (AEAGALPAAA) are compositionally biased toward low complexity. The span at 44–58 (PGAGAPAGRPEGGGP) shows a compositional bias: gly residues. Residues 105–124 (ETERPKQKTEPDRSSLRTHL) show a composition bias toward basic and acidic residues. Phosphoserine occurs at positions 127 and 162. Residues 147-308 (TDPHRSDLQF…EDGPLEEPEP (162 aa)) are disordered. Residues 196–206 (WTHQNSSSLQT) show a composition bias toward polar residues. Residues 249–259 (SQKKQDTEAAR) are compositionally biased toward basic and acidic residues. Positions 267–289 (FQIQQDTDGSWTQPSTDGSQTAP) are enriched in polar residues. The segment covering 297 to 308 (EPEDGPLEEPEP) has biased composition (acidic residues). The Nuclear export signal signature appears at 324–332 (LCPVPRLII). The disordered stretch occupies residues 334 to 387 (PETPEPEAQPVGPPSRVEGGSGGFSSASSFDESEDDVVAGGGGASDPEDRSGSK). A Phosphothreonine modification is found at threonine 336. Position 404 is a phosphoserine (serine 404). ATP is bound by residues lysine 431, 471-473 (EDL), and aspartate 484. Substrate-binding positions include lysine 486, 507-513 (RKDMYEK), and 534-541 (KPRYMQWR). Residues 509-517 (DMYEKMVAV) are calmodulin-binding. Residues lysine 558 and aspartate 638 each coordinate ATP. Lysine 641 contacts substrate.

The protein belongs to the inositol phosphokinase (IPK) family. Highly expressed in pancreas, skeletal muscle, liver, placenta and weakly in kidney and brain.

The protein localises to the nucleus. Its subcellular location is the cytoplasm. It carries out the reaction 1D-myo-inositol 1,4,5-trisphosphate + ATP = 1D-myo-inositol 1,3,4,5-tetrakisphosphate + ADP + H(+). Its activity is regulated as follows. Activated by calcium/calmodulin. Inhibited by high concentrations of the substrate Ins(1,2,4)P3, and allosterically activated by the product Ins(1,3,4,5)P4. Its function is as follows. Catalyzes the phosphorylation of 1D-myo-inositol 1,4,5-trisphosphate (InsP3) into 1D-myo-inositol 1,3,4,5-tetrakisphosphate and participates to the regulation of calcium homeostasis. Can phosphorylate inositol 2,4,5-triphosphate to inositol 2,4,5,6-tetraphosphate. This chain is Inositol-trisphosphate 3-kinase C, found in Homo sapiens (Human).